Consider the following 445-residue polypeptide: UPF0210 protein SZO_15840 (445 aa).

It belongs to the UPF0210 family. As to quaternary structure, homodimer.

The chain is UPF0210 protein SZO_15840 from Streptococcus equi subsp. zooepidemicus (strain H70).